We begin with the raw amino-acid sequence, 543 residues long: Hydroxylamine reductase (543 aa).

[4Fe-4S] cluster contacts are provided by Cys-3, Cys-6, Cys-15, and Cys-21. 8 residues coordinate hybrid [4Fe-2O-2S] cluster: His-239, Glu-263, Cys-307, Cys-398, Cys-426, Cys-451, Glu-486, and Lys-488. Cys-398 carries the post-translational modification Cysteine persulfide.

The protein belongs to the HCP family. [4Fe-4S] cluster serves as cofactor. Hybrid [4Fe-2O-2S] cluster is required as a cofactor.

The protein localises to the cytoplasm. It catalyses the reaction A + NH4(+) + H2O = hydroxylamine + AH2 + H(+). Catalyzes the reduction of hydroxylamine to form NH(3) and H(2)O. The sequence is that of Hydroxylamine reductase from Methanococcus vannielii (strain ATCC 35089 / DSM 1224 / JCM 13029 / OCM 148 / SB).